The primary structure comprises 635 residues: Phosphomethylpyrimidine synthase (635 aa).

The segment covering 1–14 (MNATVSSAVQSSLP) has biased composition (polar residues). The disordered stretch occupies residues 1–41 (MNATVSSAVQSSLPFSGKTAQVDEGTVKPLPRSQKTYLSGS). Substrate contacts are provided by residues Asn240, Met269, Tyr298, His334, 354–356 (SRG), 395–398 (DGLR), and Glu434. Residue His438 participates in Zn(2+) binding. Residue Tyr461 participates in substrate binding. His502 contributes to the Zn(2+) binding site. The [4Fe-4S] cluster site is built by Cys582, Cys585, and Cys590.

The protein belongs to the ThiC family. Homodimer. The cofactor is [4Fe-4S] cluster.

The catalysed reaction is 5-amino-1-(5-phospho-beta-D-ribosyl)imidazole + S-adenosyl-L-methionine = 4-amino-2-methyl-5-(phosphooxymethyl)pyrimidine + CO + 5'-deoxyadenosine + formate + L-methionine + 3 H(+). The protein operates within cofactor biosynthesis; thiamine diphosphate biosynthesis. Its function is as follows. Catalyzes the synthesis of the hydroxymethylpyrimidine phosphate (HMP-P) moiety of thiamine from aminoimidazole ribotide (AIR) in a radical S-adenosyl-L-methionine (SAM)-dependent reaction. The chain is Phosphomethylpyrimidine synthase from Nitrosospira multiformis (strain ATCC 25196 / NCIMB 11849 / C 71).